Here is a 777-residue protein sequence, read N- to C-terminus: Hepatocyte growth factor-regulated tyrosine kinase substrate (777 aa).

A VHS domain is found at 15–143; sequence ATSQLLLETD…IMKVEGHVFP (129 aa). An FYVE-type zinc finger spans residues 160-220; the sequence is WVDAEECHRC…VCEPCFEQLN (61 aa). Residues Cys-166, Cys-169, Cys-182, Cys-185, Cys-190, and Cys-193 each contribute to the Zn(2+) site. The residue at position 207 (Lys-207) is an N6-acetyllysine. The Zn(2+) site is built by Cys-212 and Cys-215. The tract at residues 223–319 is disordered; sequence AEGKAASTTE…SPVNSSAPLA (97 aa). Residues 225–541 form an interaction with SNX1 region; that stretch reads GKAASTTELP…QRLQEQEKER (317 aa). In terms of domain architecture, UIM spans 258-277; the sequence is QEEEELQLALALSQSEAEEK. A compositionally biased stretch (low complexity) spans 292-311; sequence AEPTPVASSAPPASSLYSSP. 3 positions are modified to phosphotyrosine: Tyr-308, Tyr-329, and Tyr-334. Residues 338 to 370 form a disordered region; sequence KQEEARKSPTPSAPVPLTEPTAQPGEGHAIPAN. Residues 443–541 are interaction with SNAP25 and TRAK2; sequence SINTMHPQLL…QRLQEQEKER (99 aa). The interval 452–570 is interaction with STAM; it reads LELLNQLDER…FSLPYAQLQA (119 aa). The interaction with NF2 stretch occupies residues 478-777; the sequence is ARGALSALRE…GSEAQLISFD (300 aa). N6-succinyllysine is present on Lys-549. Residues 645 to 658 show a composition bias toward low complexity; it reads AAAQGPAGPTTSPA. Disordered stretches follow at residues 645–698 and 712–777; these read AAAQ…YMGS and NLMP…ISFD. Composition is skewed to polar residues over residues 659–698 and 730–739; these read YSSY…YMGS and PYISGQQPVY. A compositionally biased stretch (low complexity) spans 753–777; that stretch reads PPVAQQPPAQGPPAQGSEAQLISFD.

In terms of assembly, component of the ESCRT-0 complex composed of STAM or STAM2 and HGS. Part of a complex at least composed of HSG, STAM2 (or probably STAM) and EPS15. Interacts with STAM. Interacts with STAM2. Interacts with EPS15; the interaction is direct, calcium-dependent and inhibited by SNAP25. Identified in a complex with STAM and LITAF. Found in a complex with STAM and E3 ligase ITCH and DTX3L. Interacts with E3 ligase DTX3L; the interaction brings together STAM and HSG, promotes their recruitment to early endosomes and decreases STAM and HGS ubiquitination by ITCH. Interacts with NF2; the interaction is direct. Interacts with ubiquitin; the interaction is direct. Interacts with VPS37C. Interacts with SMAD1, SMAD2 and SMAD3. Interacts with TSG101; the interaction mediates the association with the ESCRT-I complex. Interacts with SNAP25; the interaction is direct and decreases with addition of increasing concentrations of free calcium. Interacts with SNX1; the interaction is direct. Component of a 550 kDa membrane complex at least composed of HGS and SNX1 but excluding EGFR. Interacts with TRAK1. Interacts with TRAK2. Component of the CART complex, at least composed of ACTN4, HGS/HRS, MYO5B and TRIM3. Interacts (via UIM domain) with UBQLN1 (via ubiquitin-like domain). Interacts with ARRDC3. Identified in a complex containing at least ARRDC4, AVPR2 and HGS. Interacts with LAPTM4B; promotes HGS ubiquitination. In terms of processing, phosphorylated on Tyr-334. A minor site of phosphorylation on Tyr-329 is detected. Phosphorylation occurs in response to EGF, IL-2, GM-CSF and HGF. Post-translationally, ubiquitinated by ITCH.

The protein localises to the cytoplasm. It localises to the early endosome membrane. Its subcellular location is the endosome. It is found in the multivesicular body membrane. Functionally, involved in intracellular signal transduction mediated by cytokines and growth factors. When associated with STAM it suppresses DNA signaling upon stimulation by IL-2 and GM-CSF. Could be a direct effector of PI3-kinase in vesicular pathway via early endosomes and may regulate trafficking to early and late endosomes by recruiting clathrin. May concentrate ubiquitinated receptors within clathrin-coated regions. Involved in down-regulation of receptor tyrosine kinase via multivesicular body (MVBs) when complexed with STAM (ESCRT-0 complex). The ESCRT-0 complex binds ubiquitin and acts as a sorting machinery that recognizes ubiquitinated receptors and transfers them to further sequential lysosomal sorting/trafficking processes. May contribute to the efficient recruitment of SMADs to the activin receptor complex. Involved in receptor recycling via its association with the CART complex, a multiprotein complex required for efficient transferrin receptor recycling but not for EGFR degradation. The protein is Hepatocyte growth factor-regulated tyrosine kinase substrate (HGS) of Bos taurus (Bovine).